Reading from the N-terminus, the 494-residue chain is UPF0371 protein SpyM3_1021 (494 aa).

Belongs to the UPF0371 family.

The chain is UPF0371 protein SpyM3_1021 from Streptococcus pyogenes serotype M3 (strain ATCC BAA-595 / MGAS315).